Here is a 212-residue protein sequence, read N- to C-terminus: Thymidylate kinase (212 aa).

Residue 10-17 coordinates ATP; it reads GLEGAGKT.

The protein belongs to the thymidylate kinase family.

It carries out the reaction dTMP + ATP = dTDP + ADP. Functionally, phosphorylation of dTMP to form dTDP in both de novo and salvage pathways of dTTP synthesis. The protein is Thymidylate kinase of Baumannia cicadellinicola subsp. Homalodisca coagulata.